Consider the following 217-residue polypeptide: MTRTKICGITRLNDALHASSEGVDALGFNFSRKSPRSITPSAAKKIIDELPPFVSKVGIFVEQSPAEIADICSYSKIAVAQLHSERYSAADARFLKDMVHVIRVFRPDGSFSPQSLTPFAEESGVRTFLFDAYKEGMEGGTGEEIETSVARQIFPAEGAPFFRVLAGGLNPGNVAEAIRQFRPYGVDTASGVEAKPGIKDPEKISAFLLAVRLANQP.

It belongs to the TrpF family.

It carries out the reaction N-(5-phospho-beta-D-ribosyl)anthranilate = 1-(2-carboxyphenylamino)-1-deoxy-D-ribulose 5-phosphate. It participates in amino-acid biosynthesis; L-tryptophan biosynthesis; L-tryptophan from chorismate: step 3/5. The sequence is that of N-(5'-phosphoribosyl)anthranilate isomerase from Chlorobium phaeovibrioides (strain DSM 265 / 1930) (Prosthecochloris vibrioformis (strain DSM 265)).